Consider the following 341-residue polypeptide: Heme A synthase (341 aa).

The next 8 membrane-spanning stretches (helical) occupy residues 7 to 27 (VTVW…IGGI), 92 to 112 (LFGR…AITK), 118 to 138 (MVAK…MGWF), 159 to 179 (LFLT…CAGV), 190 to 210 (FFTA…GALV), 253 to 273 (FLHR…PFWL), 280 to 300 (LFLA…VSVV), and 302 to 322 (IFLA…GVHM). H255 serves as a coordination point for heme. Residue H308 coordinates heme.

It belongs to the COX15/CtaA family. Type 2 subfamily. As to quaternary structure, interacts with CtaB. Requires heme b as cofactor.

It localises to the cell membrane. The enzyme catalyses Fe(II)-heme o + 2 A + H2O = Fe(II)-heme a + 2 AH2. It functions in the pathway porphyrin-containing compound metabolism; heme A biosynthesis; heme A from heme O: step 1/1. Catalyzes the conversion of heme O to heme A by two successive hydroxylations of the methyl group at C8. The first hydroxylation forms heme I, the second hydroxylation results in an unstable dihydroxymethyl group, which spontaneously dehydrates, resulting in the formyl group of heme A. This Anaplasma marginale (strain St. Maries) protein is Heme A synthase.